Here is a 351-residue protein sequence, read N- to C-terminus: Alcohol dehydrogenase 5 (351 aa).

Zn(2+) is bound by residues Cys-47, His-70, Cys-101, Cys-104, Cys-107, Cys-115, and Cys-183. NAD(+) contacts are provided by residues 181-187 (GACGGLG), Asp-205, Lys-210, 272-274 (VGM), and Arg-344.

The protein belongs to the zinc-containing alcohol dehydrogenase family. Requires Zn(2+) as cofactor.

It carries out the reaction a primary alcohol + NAD(+) = an aldehyde + NADH + H(+). The enzyme catalyses a secondary alcohol + NAD(+) = a ketone + NADH + H(+). This chain is Alcohol dehydrogenase 5 (ADH5), found in Saccharomyces pastorianus (Lager yeast).